Reading from the N-terminus, the 465-residue chain is UDP-N-acetylmuramate--L-alanine ligase (465 aa).

112–118 lines the ATP pocket; that stretch reads GTHGKTT.

Belongs to the MurCDEF family.

It localises to the cytoplasm. It carries out the reaction UDP-N-acetyl-alpha-D-muramate + L-alanine + ATP = UDP-N-acetyl-alpha-D-muramoyl-L-alanine + ADP + phosphate + H(+). The protein operates within cell wall biogenesis; peptidoglycan biosynthesis. Cell wall formation. The polypeptide is UDP-N-acetylmuramate--L-alanine ligase (Burkholderia multivorans (strain ATCC 17616 / 249)).